The sequence spans 276 residues: Small ribosomal subunit protein uS3 (276 aa).

In terms of domain architecture, KH type-2 spans 39 to 110; the sequence is IRRETMKFFK…KINIKIKEIK (72 aa). Residues 218–243 form a disordered region; the sequence is DAGQVINRKSSREKSEHFDRSRVDDR. Positions 227-243 are enriched in basic and acidic residues; the sequence is SSREKSEHFDRSRVDDR.

The protein belongs to the universal ribosomal protein uS3 family. As to quaternary structure, part of the 30S ribosomal subunit. Forms a tight complex with proteins S10 and S14.

Its function is as follows. Binds the lower part of the 30S subunit head. Binds mRNA in the 70S ribosome, positioning it for translation. The polypeptide is Small ribosomal subunit protein uS3 (Borrelia hermsii (strain HS1 / DAH)).